A 130-amino-acid chain; its full sequence is HTH-type transcriptional regulator KmtR (130 aa).

The HTH arsR-type domain maps to leucine 10–glycine 104. The H-T-H motif DNA-binding region spans valine 44–methionine 67. The tract at residues histidine 110–glycine 130 is disordered.

Its activity is regulated as follows. Binding to DNA is inhibited by nickel and cobalt ions. Functionally, represses expression of Rv2025c and its own expression. Acts by binding to the promoter regions. This is HTH-type transcriptional regulator KmtR (kmtR) from Mycobacterium tuberculosis (strain ATCC 25618 / H37Rv).